We begin with the raw amino-acid sequence, 417 residues long: Maltodextrin-binding protein MdxE (417 aa).

The signal sequence occupies residues 1–22; that stretch reads MVLLKKGFAILAASFLAIGLAA. Cys-23 is lipidated: N-palmitoyl cysteine. Residue Cys-23 is the site of S-diacylglycerol cysteine attachment.

Belongs to the bacterial solute-binding protein 1 family. As to quaternary structure, the complex is composed of two ATP-binding proteins (MsmX), two transmembrane proteins (MdxF and MdxG) and a solute-binding protein (MdxE).

It localises to the cell membrane. Inhibited by glucose and lactose. Its function is as follows. Part of the ABC transporter complex involved in maltodextrin import. Binds maltodextrin. Can also bind maltose with low affinity, but is not involved in its uptake. The sequence is that of Maltodextrin-binding protein MdxE (mdxE) from Bacillus subtilis (strain 168).